We begin with the raw amino-acid sequence, 235 residues long: Sugar fermentation stimulation protein homolog (235 aa).

This sequence belongs to the SfsA family.

The polypeptide is Sugar fermentation stimulation protein homolog (Aliivibrio salmonicida (strain LFI1238) (Vibrio salmonicida (strain LFI1238))).